A 636-amino-acid polypeptide reads, in one-letter code: 1-deoxy-D-xylulose-5-phosphate synthase (636 aa).

Thiamine diphosphate contacts are provided by residues His74 and 115–117 (GHS). Asp146 contacts Mg(2+). Thiamine diphosphate contacts are provided by residues 147–148 (GA), Asn175, Tyr286, and Glu367. Residue Asn175 participates in Mg(2+) binding.

Belongs to the transketolase family. DXPS subfamily. Homodimer. The cofactor is Mg(2+). Thiamine diphosphate is required as a cofactor.

It carries out the reaction D-glyceraldehyde 3-phosphate + pyruvate + H(+) = 1-deoxy-D-xylulose 5-phosphate + CO2. It participates in metabolic intermediate biosynthesis; 1-deoxy-D-xylulose 5-phosphate biosynthesis; 1-deoxy-D-xylulose 5-phosphate from D-glyceraldehyde 3-phosphate and pyruvate: step 1/1. Functionally, catalyzes the acyloin condensation reaction between C atoms 2 and 3 of pyruvate and glyceraldehyde 3-phosphate to yield 1-deoxy-D-xylulose-5-phosphate (DXP). This Halothermothrix orenii (strain H 168 / OCM 544 / DSM 9562) protein is 1-deoxy-D-xylulose-5-phosphate synthase.